The following is a 252-amino-acid chain: D-aminoacyl-tRNA deacylase (252 aa).

This sequence belongs to the DtdA deacylase family. As to quaternary structure, monomer. The cofactor is Zn(2+).

The catalysed reaction is a D-aminoacyl-tRNA + H2O = a tRNA + a D-alpha-amino acid + H(+). The enzyme catalyses glycyl-tRNA(Ala) + H2O = tRNA(Ala) + glycine + H(+). D-aminoacyl-tRNA deacylase with broad substrate specificity. By recycling D-aminoacyl-tRNA to D-amino acids and free tRNA molecules, this enzyme counteracts the toxicity associated with the formation of D-aminoacyl-tRNA entities in vivo. In Pyrobaculum arsenaticum (strain DSM 13514 / JCM 11321 / PZ6), this protein is D-aminoacyl-tRNA deacylase.